The sequence spans 278 residues: Nucleotide-binding protein Tlet_0523 (278 aa).

9-16 (GLSGAGKS) serves as a coordination point for ATP. 58 to 61 (DIRS) is a binding site for GTP.

This sequence belongs to the RapZ-like family.

Functionally, displays ATPase and GTPase activities. This Pseudothermotoga lettingae (strain ATCC BAA-301 / DSM 14385 / NBRC 107922 / TMO) (Thermotoga lettingae) protein is Nucleotide-binding protein Tlet_0523.